A 540-amino-acid polypeptide reads, in one-letter code: Putative sel1-like repeat-containing protein R815 (540 aa).

Sel1-like repeat units lie at residues 129–164 (IDAQ…YKEN), 165–200 (LFGL…KHNY), 201–236 (PAVK…NQGY), 237–272 (PLAQ…NNGC), 273–308 (LYAT…SENY), and 309–344 (LLAI…NSTK).

This chain is Putative sel1-like repeat-containing protein R815, found in Acanthamoeba polyphaga (Amoeba).